A 181-amino-acid polypeptide reads, in one-letter code: Large ribosomal subunit protein uL10 (181 aa).

This sequence belongs to the universal ribosomal protein uL10 family. As to quaternary structure, part of the ribosomal stalk of the 50S ribosomal subunit. The N-terminus interacts with L11 and the large rRNA to form the base of the stalk. The C-terminus forms an elongated spine to which L12 dimers bind in a sequential fashion forming a multimeric L10(L12)X complex.

Functionally, forms part of the ribosomal stalk, playing a central role in the interaction of the ribosome with GTP-bound translation factors. This chain is Large ribosomal subunit protein uL10, found in Protochlamydia amoebophila (strain UWE25).